The primary structure comprises 463 residues: Topoisomerase I damage affected protein 11 (463 aa).

A disordered region spans residues 1 to 110 (MNGSTSSDAV…TIPDSPIPTA (110 aa)). Composition is skewed to polar residues over residues 17 to 32 (TTPS…GSDT) and 40 to 55 (ITPS…SKGI). Low complexity predominate over residues 96–110 (SSPSSTIPDSPIPTA). Positions 145–177 (IVEIKDSIGNLTSKLQRNENELHSLREVIQRSL) form a coiled coil. Disordered stretches follow at residues 180–255 (ELNS…DSTL), 281–358 (MIPQ…TESH), and 388–413 (ADED…NDQK). Positions 225–238 (LSSSSSGVPPVLSS) are enriched in low complexity. Over residues 288 to 304 (EGSDKTMDSHKSRHSED) the composition is skewed to basic and acidic residues. Over residues 305-322 (STSSLGSISSPLNSKSKS) the composition is skewed to low complexity.

This sequence belongs to the TDA11 family.

Its subcellular location is the cytoplasm. This is Topoisomerase I damage affected protein 11 (TDA11) from Debaryomyces hansenii (strain ATCC 36239 / CBS 767 / BCRC 21394 / JCM 1990 / NBRC 0083 / IGC 2968) (Yeast).